The following is a 630-amino-acid chain: 1-deoxy-D-xylulose-5-phosphate synthase (630 aa).

Residues His-80 and 121-123 contribute to the thiamine diphosphate site; that span reads GHS. Asp-152 lines the Mg(2+) pocket. Residues 153-154, Asn-181, Tyr-288, and Glu-370 contribute to the thiamine diphosphate site; that span reads GA. Asn-181 serves as a coordination point for Mg(2+).

Belongs to the transketolase family. DXPS subfamily. In terms of assembly, homodimer. It depends on Mg(2+) as a cofactor. The cofactor is thiamine diphosphate.

The catalysed reaction is D-glyceraldehyde 3-phosphate + pyruvate + H(+) = 1-deoxy-D-xylulose 5-phosphate + CO2. It participates in metabolic intermediate biosynthesis; 1-deoxy-D-xylulose 5-phosphate biosynthesis; 1-deoxy-D-xylulose 5-phosphate from D-glyceraldehyde 3-phosphate and pyruvate: step 1/1. Its function is as follows. Catalyzes the acyloin condensation reaction between C atoms 2 and 3 of pyruvate and glyceraldehyde 3-phosphate to yield 1-deoxy-D-xylulose-5-phosphate (DXP). The polypeptide is 1-deoxy-D-xylulose-5-phosphate synthase (Colwellia psychrerythraea (strain 34H / ATCC BAA-681) (Vibrio psychroerythus)).